The chain runs to 1218 residues: MGESQSKQESNTRVAQHGSQQDVDPTFQTKRALERERSSPQVEQSFLGQLQSLLGWSSTSKDVPLSQLIREMDHESRRHSHQSKKKLDRSEHISEGTIPEIYEKRKETISHTQSMEQKYLFQNFTKLLLLQKCCPGGSEKLVRESWHPCVPEEGGHMIEIQDLFDPNLDTEKKPQLVIIEGAAGIGKSTLARQVKRAWDEGQLYRDRFQHVFFFSCRELAQCKQLSLAELIAQGQEVPTAPTRQILSRPEKLLFILDGIDEPAWVLEDQNPELCVHWSQAQPVHTLLGSLLGKSILPEASLMLTARTTALQKLVPSLGQPHRVEVLGFSEFERKDYFYKYFAKERNTIIDFNLIGSIPVLLTLCEVPWVCWLLCTCLEKQMQQGEVLSLTSQTTTALCLKYLSLTIPGQHLSTQLRTLCSLAAEGICQRRTLFSKSDLCKQGLAEDAIATFLKIGVLQRQPSSLSYSFAHLCLQEFFAAMSYILEDSEEAHGDMGNDRTVETLVERYGRQNLFEAPTVRFLLGLLNTREMREMENIFACKFPWETKLKLLQSIIGEPFCQPCHLGLFHCLYENQEEELLTETMLCFPLTASGPNHMEATVFQTNVKRLVIQTDMELMVVTFCITFSHVRSLRLKGKGQQEYKLTAPAMVLYRWTPISEASWKVLFSNLKCTRNLEELDLSGNPLSYSAVRSLCTALRQPGCRLKTLWLVDCGLTSRCCSFLASMLSAHSRLAELDLRLNDLGDNGVRQLCEGLRNPACNLSILRLDQASLSEQVITELRALETKNPKLFISSTWMSHMTMPTENTDGEESLTSSKQQQQQSGDKHMEPLGTDDDFWGPSGPVSTEVVDRERNLYRVRLPMAGSYHCPSTGLHFVVTRAVTIEIGFCAWSQFLHETPLQHSHMVAGPLFDIKAEHGAVTAVCLPHFVSLQEGKVDSSLFHVAHFQDHGMVLETPARVEPHFAVLENPSFSPMGVLLRMIPAVGHFIPITSITLIYYRLYLEDITFHLYLVPNDCTIRKAIDEEELKFQFVRINKPPPVDALYVGSRYIVSSSKEVEILPKELELCYRSPRESQLFSEIYVGNIGSGINLQLTDKKYMNLIWEALLKPGDLRPALPRMASAPKDAPALLHFVDQHREQLVARVTSVDPLLDKLHGLVLSEEDYETVRAEATNQDKMRKLFRGSRSWSWDCKDHFYQALKETHPHLIMDLLEKSGGVSVRL.

A compositionally biased stretch (polar residues) spans 1–29 (MGESQSKQESNTRVAQHGSQQDVDPTFQT). Disordered stretches follow at residues 1–44 (MGES…QVEQ) and 71–91 (EMDHESRRHSHQSKKKLDRSE). Over residues 77 to 87 (RRHSHQSKKKL) the composition is skewed to basic residues. Positions 175–484 (QLVIIEGAAG…EFFAAMSYIL (310 aa)) constitute an NACHT domain. 181 to 188 (GAAGIGKS) contributes to the ATP binding site. 3 LRR repeats span residues 343-364 (KERNTIIDFNLIGSIPVLLTLC), 673-693 (NLEELDLSGNPLSYSAVRSLC), and 730-750 (RLAELDLRLNDLGDNGVRQLC). The span at 799–815 (TMPTENTDGEESLTSSK) shows a compositional bias: polar residues. A disordered region spans residues 799–842 (TMPTENTDGEESLTSSKQQQQQSGDKHMEPLGTDDDFWGPSGPV). A ZU5 region spans residues 835 to 968 (FWGPSGPVST…HFAVLENPSF (134 aa)). The FIIND domain maps to 835–1118 (FWGPSGPVST…LRPALPRMAS (284 aa)). The UPA stretch occupies residues 969–1118 (SPMGVLLRMI…LRPALPRMAS (150 aa)). The CARD domain occupies 1122-1211 (DAPALLHFVD…HLIMDLLEKS (90 aa)).

Belongs to the NLRP family. Interacts (via LRR repeats) with BCL2 and BCL2L1 (via the loop between motifs BH4 and BH3). Interacts with NOD2; this interaction is enhanced in the presence of muramyl dipeptide (MDP) and increases IL1B release. Interacts with EIF2AK2/PKR; this interaction requires EIF2AK2 activity, is accompanied by EIF2AK2 autophosphorylation and promotes inflammasome assembly in response to danger-associated signals. Interacts with MEFV; this interaction targets Nlrp1a to degradation by autophagy, hence preventing excessive IL1B- and IL18-mediated inflammation. Interacts with DPP9; leading to inhibit activation of the inflammasome. DPP9 acts via formation of a ternary complex, composed of a DPP9 homodimer, one full-length NLRP1 protein, and one cleaved C-terminus of Nlrp1a (NACHT, LRR and PYD domains-containing protein 1a, C-terminus). Interacts with DPP8; leading to inhibit activation of the inflammasome, probably via formation of a ternary complex with DPP8. In terms of assembly, interacts with the C-terminal part of Nlrp1a (NACHT, LRR and PYD domains-containing protein 1a, C-terminus) in absence of pathogens and other damage-associated signals. As to quaternary structure, interacts with the N-terminal part of Nlrp1a (NACHT, LRR and PYD domains-containing protein 1a, N-terminus) in absence of pathogens and other damage-associated signals. Homomultimer; forms the Nlrp1a inflammasome polymeric complex, a filament composed of homopolymers of this form in response to pathogens and other damage-associated signals. The Nlrp1a inflammasome polymeric complex directly recruits pro-caspase-1 (proCASP1) independently of PYCARD/ASC. Interacts (via CARD domain) with CASP1 (via CARD domain); leading to CASP1 activation. Autocatalytically cleaved. Autocatalytic cleavage in FIIND region occurs constitutively, prior to activation signals, and is required for inflammasome activity (IL1B release), possibly by facilitating CASP1 binding. Both N- and C-terminal parts remain associated non-covalently. In terms of processing, ubiquitinated in response to pathogen-associated signals, leading to its degradation by the proteasome and subsequent release of the cleaved C-terminal part of the protein (NACHT, LRR and PYD domains-containing protein 1a, C-terminus), which polymerizes and forms the Nlrp1a inflammasome.

The protein resides in the cytoplasm. It is found in the cytosol. It localises to the nucleus. Its subcellular location is the inflammasome. Its activity is regulated as follows. Activated by pathogens and other damage-associated signals: activation promotes ubiquitination and degradation of the N-terminal part, releasing the cleaved C-terminal part of the protein (NACHT, LRR and PYD domains-containing protein 1a, C-terminus), which polymerizes and forms the Nlrp1a inflammasome. Nlrp1a inflammasome is inhibited by DPP8 and DPP9, which sequester the C-terminal fragment of Nlrp1a (NACHT, LRR and PYD domains-containing protein 1a, C-terminus) in a ternary complex, thereby preventing Nlrp1a oligomerization and activation. Nlrp1a inflammasome is strongly activated by Val-boroPro (Talabostat, PT-100), an inhibitor of dipeptidyl peptidases DPP8 and DPP9. Val-boroPro relieves inhibition of DPP8 and/or DPP9 by promoting disruption of the ternary complex, releasing its C-terminal part from autoinhibition. Not activated by cleavage by B.anthracis lethal toxin (LT) endopeptidase. In terms of biological role, acts as the sensor component of the Nlrp1a inflammasome, which mediates inflammasome activation in response to various pathogen-associated signals, leading to subsequent pyroptosis. Inflammasomes are supramolecular complexes that assemble in the cytosol in response to pathogens and other damage-associated signals and play critical roles in innate immunity and inflammation. Acts as a recognition receptor (PRR): recognizes specific pathogens and other damage-associated signals, such as Val-boroPro inhibitor, and mediates the formation of the inflammasome polymeric complex. In response to pathogen-associated signals, the N-terminal part of Nlrp1a is degraded by the proteasome, releasing the cleaved C-terminal part of the protein (NACHT, LRR and PYD domains-containing protein 1a, C-terminus), which polymerizes to initiate the formation of the inflammasome complex: the inflammasome directly recruits pro-caspase-1 (proCASP1) independently of PYCARD/ASC and promotes caspase-1 (CASP1) activation, which subsequently cleaves and activates inflammatory cytokines IL1B and IL18 and gasdermin-D (GSDMD), leading to pyroptosis. In the absence of GSDMD expression, the Nlrp1a inflammasome is able to recruit and activate CASP8, leading to activation of gasdermin-E (GSDME). Constitutes the precursor of the Nlrp1a inflammasome, which mediates autoproteolytic processing within the FIIND domain to generate the N-terminal and C-terminal parts, which are associated non-covalently in absence of pathogens and other damage-associated signals. Its function is as follows. Regulatory part that prevents formation of the Nlrp1a inflammasome: in absence of pathogens and other damage-associated signals, interacts with the C-terminal part of Nlrp1a (NACHT, LRR and PYD domains-containing protein 1a, C-terminus), preventing activation of the Nlrp1a inflammasome. In response to pathogen-associated signals, this part is ubiquitinated by the N-end rule pathway and degraded by the proteasome, releasing the cleaved C-terminal part of the protein, which polymerizes and forms the Nlrp1a inflammasome. Functionally, constitutes the active part of the Nlrp1a inflammasome. In absence of pathogens and other damage-associated signals, interacts with the N-terminal part of Nlrp1a (NACHT, LRR and PYD domains-containing protein 1a, N-terminus), preventing activation of the Nlrp1a inflammasome. In response to pathogen-associated signals, the N-terminal part of Nlrp1a is degraded by the proteasome, releasing this form, which polymerizes to form the Nlrp1a inflammasome complex: the Nlrp1a inflammasome complex then directly recruits pro-caspase-1 (proCASP1) and promotes caspase-1 (CASP1) activation, leading to gasdermin-D (GSDMD) cleavage and subsequent pyroptosis. This Rattus norvegicus (Rat) protein is NACHT, LRR and PYD domains-containing protein 1a allele 3.